The following is a 236-amino-acid chain: Small ribosomal subunit protein uS2c (236 aa).

The protein belongs to the universal ribosomal protein uS2 family.

The protein localises to the plastid. It is found in the chloroplast. The chain is Small ribosomal subunit protein uS2c (rps2) from Vitis vinifera (Grape).